Consider the following 306-residue polypeptide: 3-methyl-2-oxobutanoate hydroxymethyltransferase (306 aa).

Asp53 and Asp96 together coordinate Mg(2+). Residues 53–54 (DS), Asp96, and Lys126 each bind 3-methyl-2-oxobutanoate. Mg(2+) is bound at residue Glu128. The active-site Proton acceptor is the Glu195.

Belongs to the PanB family. In terms of assembly, homodecamer; pentamer of dimers. Mg(2+) serves as cofactor.

The protein localises to the cytoplasm. The catalysed reaction is 3-methyl-2-oxobutanoate + (6R)-5,10-methylene-5,6,7,8-tetrahydrofolate + H2O = 2-dehydropantoate + (6S)-5,6,7,8-tetrahydrofolate. Its pathway is cofactor biosynthesis; (R)-pantothenate biosynthesis; (R)-pantoate from 3-methyl-2-oxobutanoate: step 1/2. Its function is as follows. Catalyzes the reversible reaction in which hydroxymethyl group from 5,10-methylenetetrahydrofolate is transferred onto alpha-ketoisovalerate to form ketopantoate. The polypeptide is 3-methyl-2-oxobutanoate hydroxymethyltransferase (Anaeromyxobacter sp. (strain K)).